Reading from the N-terminus, the 535-residue chain is MTPVSEIGTLDVLIFLVFLWLLSKLVGRLVRRGRTTPLRGPANKSLFFGLTRYLNEADDPGAIYESWAAEYGPAFRVPSVLGSHRIMICDAKAIAHFYSRETFGYVQTSLARSAIKNLFGRGLIWSEGESHKRQRKALSPAFSNAAIRRLTSVFFDSSYKMKAAWDSILESNPNNSVIDVQKWMNHISLDSIGIAGFSHDFGSLDGKHSDVAAVFDSFGTSKPSYFSMVIFLLAQVFPILLKLPTNRNLLTNKLRKTMSEIADVLLDRTRKEKEGKMGIVEEKSIIGLLIKAESAETELRMSQEEILAQMNVLLLAGYETTSISLTWALIELSKKPEKQAKLREELLSQFTSTDPTWEQLTSGLPYLDSVVHEVLRLHPPLGETSRVAAEDDIMPLSTPLVTRSGQTVSSIAIGKGTVVGVPIRCMNRSEVLWGKDAKEFIPERWLEPGFGENNEIQGHRHLLTFVDGPRTCLGKGFAIAEFKAALSVLIRSYTFEFPGPNGAVPKIERHRSILPRPKVEGQDGAKVPLRVRRVE.

Transmembrane regions (helical) follow at residues 7–27 (IGTLDVLIFLVFLWLLSKLVG) and 225–245 (YFSMVIFLLAQVFPILLKLPT). Cysteine 472 lines the heme pocket.

This sequence belongs to the cytochrome P450 family. Heme serves as cofactor.

The protein resides in the membrane. The protein operates within secondary metabolite biosynthesis; terpenoid biosynthesis. Functionally, cytochrome P450 monooxygenase; part of the gene cluster that mediates the biosynthesis of clavilactone A, a meroterpenoid that features a unique benzo-fused ten-membered carbocyclic ring unit with an alpha,beta-epoxy-gamma-lactone moiety, forming an intriguing 10/5/3 tricyclic nested skeleton. Cytochrome P450 monooxygenases claO, claP, claQ, claU, and claW are close orthologs, suggesting that a redundant function or pseudogenes are present in the cla cluster. These monoxygenases are not involved in clavilactone A biosynthesis nor its modification. ClaR, ClaS and ClaT are sufficient to produce clavilactone A. The biosynthesis begins with the prenyltransferase claS that transfers geranyl pyrophosphate (GPP) to hydroquinone to produces geranylhydroquinone. The cytochrome P450 monooxygenase claR then catalyzes the diradical coupling reaction between the intramolecular hydroquinone and allyl moieties to form the benzo-fused ten-membered carbocyclic ring unit of wigantol. Finally the cytochrome P450 monooxygenase claT exquisitely and stereoselectively assembles the alpha,beta-epoxy-gamma-lactone moiety, producing clavilactone A via arnebinol A. This is Cytochrome P450 monooxygenase claP from Ampulloclitocybe clavipes (Club foot).